The following is a 349-amino-acid chain: Ion-translocating oxidoreductase complex subunit D (349 aa).

The next 3 helical transmembrane spans lie at 36–56 (CAFF…VALS), 77–99 (SAML…WMIV), and 124–144 (AMAA…SWIA). Position 185 is an FMN phosphoryl threonine (Thr185). A run of 5 helical transmembrane segments spans residues 212-232 (GTGV…LVLL), 239-259 (WHIS…GFLL), 265-285 (ASPL…FIAT), 291-311 (ATSP…VYVI), and 315-335 (GGYP…APFI).

The protein belongs to the NqrB/RnfD family. The complex is composed of six subunits: RnfA, RnfB, RnfC, RnfD, RnfE and RnfG. FMN is required as a cofactor.

It is found in the cell inner membrane. Functionally, part of a membrane-bound complex that couples electron transfer with translocation of ions across the membrane. The protein is Ion-translocating oxidoreductase complex subunit D of Shewanella sp. (strain MR-4).